A 401-amino-acid chain; its full sequence is O-methyltransferase SAT18 (401 aa).

Asp-249 contributes to the S-adenosyl-L-methionine binding site. His-300 serves as the catalytic Proton acceptor.

This sequence belongs to the class I-like SAM-binding methyltransferase superfamily. Cation-independent O-methyltransferase family.

The protein operates within mycotoxin biosynthesis. Functionally, O-methyltransferase; part of the satratoxin SC3 cluster involved in the biosynthesis of satratoxins, trichothecene mycotoxins that are associated with human food poisonings. Satratoxins are suggested to be made by products of multiple gene clusters (SC1, SC2 and SC3) that encode 21 proteins in all, including polyketide synthases, acetyltransferases, and other enzymes expected to modify the trichothecene skeleton. SC1 encodes 10 proteins, SAT1 to SAT10. The largest are SAT8, which encodes a putative polyketide synthase (PKS) with a conventional non-reducing architecture, and SAT10, a putative protein containing four ankyrin repeats and thus may be involved in protein scaffolding. The putative short-chain reductase SAT3 may assist the PKS in some capacity. SAT6 contains a secretory lipase domain and acts probably as a trichothecene esterase. SAT5 encodes a putative acetyltransferase, and so, with SAT6, may affect endogenous protection from toxicity. The probable transcription factor SAT9 may regulate the expression of the SC1 cluster. SC2 encodes proteins SAT11 to SAT16, the largest of which encodes the putative reducing PKS SAT13. SAT11 is a cytochrome P450 monooxygenase, while SAT14 and SAT16 are probable acetyltransferases. The SC2 cluster may be regulated by the transcription factor SAT15. SC3 is a small cluster that encodes 5 proteins, SAT17 to SAT21. SAT21 is a putative MFS-type transporter which may have a role in exporting secondary metabolites. The four other proteins putatively encoded in SC3 include the taurine hydroxylase-like protein SAT17, the O-methyltransferase SAT18, the acetyltransferase SAT19, and the Cys6-type zinc finger SAT20, the latter being probably involved in regulation of SC3 expression. The protein is O-methyltransferase SAT18 of Stachybotrys chartarum (strain CBS 109288 / IBT 7711) (Toxic black mold).